The chain runs to 149 residues: Putative pre-16S rRNA nuclease (149 aa).

The protein belongs to the YqgF nuclease family.

Its subcellular location is the cytoplasm. Its function is as follows. Could be a nuclease involved in processing of the 5'-end of pre-16S rRNA. This Burkholderia ambifaria (strain MC40-6) protein is Putative pre-16S rRNA nuclease.